Reading from the N-terminus, the 196-residue chain is Adenylate kinase (196 aa).

Residue 9–17 (GIPGVGKST) participates in ATP binding.

Belongs to the archaeal adenylate kinase family.

The protein localises to the cytoplasm. The enzyme catalyses AMP + ATP = 2 ADP. This chain is Adenylate kinase (adkA), found in Pyrococcus horikoshii (strain ATCC 700860 / DSM 12428 / JCM 9974 / NBRC 100139 / OT-3).